The chain runs to 364 residues: UDP-N-acetylglucosamine--N-acetylmuramyl-(pentapeptide) pyrophosphoryl-undecaprenol N-acetylglucosamine transferase (364 aa).

UDP-N-acetyl-alpha-D-glucosamine is bound by residues 10–12, asparagine 128, arginine 170, serine 199, isoleucine 250, and glutamine 295; that span reads TGG.

This sequence belongs to the glycosyltransferase 28 family. MurG subfamily.

The protein resides in the cell inner membrane. It catalyses the reaction di-trans,octa-cis-undecaprenyl diphospho-N-acetyl-alpha-D-muramoyl-L-alanyl-D-glutamyl-meso-2,6-diaminopimeloyl-D-alanyl-D-alanine + UDP-N-acetyl-alpha-D-glucosamine = di-trans,octa-cis-undecaprenyl diphospho-[N-acetyl-alpha-D-glucosaminyl-(1-&gt;4)]-N-acetyl-alpha-D-muramoyl-L-alanyl-D-glutamyl-meso-2,6-diaminopimeloyl-D-alanyl-D-alanine + UDP + H(+). The protein operates within cell wall biogenesis; peptidoglycan biosynthesis. Functionally, cell wall formation. Catalyzes the transfer of a GlcNAc subunit on undecaprenyl-pyrophosphoryl-MurNAc-pentapeptide (lipid intermediate I) to form undecaprenyl-pyrophosphoryl-MurNAc-(pentapeptide)GlcNAc (lipid intermediate II). The protein is UDP-N-acetylglucosamine--N-acetylmuramyl-(pentapeptide) pyrophosphoryl-undecaprenol N-acetylglucosamine transferase of Chlorobaculum parvum (strain DSM 263 / NCIMB 8327) (Chlorobium vibrioforme subsp. thiosulfatophilum).